We begin with the raw amino-acid sequence, 422 residues long: MAFSSLLRSAASYTVAAPRPDFFSSPASDHSKVLSSLGFSRNLKPSRFSSGISSSLQNGNARSVQPIKATATEVPSAVRRSSSSGKTKVGINGFGRIGRLVLRIATSRDDIEVVAVNDPFIDAKYMAYMLKYDSTHGNFKGSINVIDDSTLEINGKKVNVVSKRDPSEIPWADLGADYVVESSGVFTTLSKAASHLKGGAKKVIISAPSADAPMFVVGVNEHTYQPNMDIVSNASCTTNCLAPLAKVVHEEFGILEGLMTTVHATTATQKTVDGPSMKDWRGGRGASQNIIPSSTGAAKAVGKVLPELNGKLTGMAFRVPTSNVSVVDLTCRLEKGASYEDVKAAIKHASEGPLKGILGYTDEDVVSNDFVGDSRSSIFDANAGIGLSKSFVKLVSWYDNEWGYSNRVLDLIEHMALVAASH.

The transit peptide at 1–69 (MAFSSLLRSA…NARSVQPIKA (69 aa)) directs the protein to the chloroplast. The segment covering 50-63 (SGISSSLQNGNARS) has biased composition (polar residues). Positions 50–84 (SGISSSLQNGNARSVQPIKATATEVPSAVRRSSSS) are disordered. N-acetylthreonine is present on Thr70. NAD(+) is bound by residues 96-97 (RI), Asp118, and Arg164. Residues 235–237 (SCT), Thr266, 295–296 (TG), and Arg318 contribute to the D-glyceraldehyde 3-phosphate site. Residue Cys236 is the Nucleophile of the active site. Asn400 provides a ligand contact to NAD(+).

This sequence belongs to the glyceraldehyde-3-phosphate dehydrogenase family. As to quaternary structure, homotetramer. Expressed in shoot and root vasculature, leaf veins and vascular tissue of flowers and siliques.

It localises to the plastid. The protein resides in the chloroplast stroma. It carries out the reaction D-glyceraldehyde 3-phosphate + phosphate + NAD(+) = (2R)-3-phospho-glyceroyl phosphate + NADH + H(+). Involved in plastidial glycolytic pathway and plays a specific role in glycolytic energy production in non-green plastids and chloroplasts. Essential for breakdown of starch to form sucrose for export to non-photosynthetic tissues, and to generate primary metabolites for anabolic pathways such as fatty acid and amino acid synthesis. Plays an important role in plant development by providing substrates for the phosphorylated pathway of serine biosynthesis in roots. Plays a crucial role in pollen development. Functionally redundant with GAPCP2. In Arabidopsis thaliana (Mouse-ear cress), this protein is Glyceraldehyde-3-phosphate dehydrogenase GAPCP1, chloroplastic (GAPCP1).